The sequence spans 213 residues: Superoxide dismutase [Fe] (213 aa).

Residues His26, His73, Asp156, and His160 each coordinate Fe cation.

It belongs to the iron/manganese superoxide dismutase family. As to quaternary structure, homodimer. Fe cation serves as cofactor.

It carries out the reaction 2 superoxide + 2 H(+) = H2O2 + O2. Its function is as follows. Destroys superoxide anion radicals which are normally produced within the cells and which are toxic to biological systems. In Helicobacter pylori (strain ATCC 700392 / 26695) (Campylobacter pylori), this protein is Superoxide dismutase [Fe] (sodB).